Consider the following 236-residue polypeptide: Conserved regulator of innate immunity protein 3 (236 aa).

The transit peptide at 1-36 (MNTASLVRSLSRVALRSSQVVRMAAPRHFSQSAKVL) directs the protein to the mitochondrion.

The protein belongs to the MAM33 family.

Its subcellular location is the mitochondrion matrix. In Caenorhabditis elegans, this protein is Conserved regulator of innate immunity protein 3 (cri-3).